Reading from the N-terminus, the 727-residue chain is Elongation factor 2 (727 aa).

Positions 19–260 (EQIRNMGICA…MSIKHLPNPL (242 aa)) constitute a tr-type G domain. Residues 28–35 (AHIDHGKT), 94–98 (DTPGH), and 148–151 (NKVD) each bind GTP. A Diphthamide modification is found at H603.

The protein belongs to the TRAFAC class translation factor GTPase superfamily. Classic translation factor GTPase family. EF-G/EF-2 subfamily.

It localises to the cytoplasm. Its function is as follows. Catalyzes the GTP-dependent ribosomal translocation step during translation elongation. During this step, the ribosome changes from the pre-translocational (PRE) to the post-translocational (POST) state as the newly formed A-site-bound peptidyl-tRNA and P-site-bound deacylated tRNA move to the P and E sites, respectively. Catalyzes the coordinated movement of the two tRNA molecules, the mRNA and conformational changes in the ribosome. The polypeptide is Elongation factor 2 (Methanococcus maripaludis (strain DSM 14266 / JCM 13030 / NBRC 101832 / S2 / LL)).